The primary structure comprises 126 residues: MGKQATERRLADTEARAITKMIRTSPYKLNLVAESIRGKTAERALAELTFSKRRMADTVKKTLQSAIANAENNHQLDVDQLIVSEAYVGKAMVLKRWRARARGRVGKILKPFSNLTIVVRERGETA.

This sequence belongs to the universal ribosomal protein uL22 family. Part of the 50S ribosomal subunit.

Its function is as follows. This protein binds specifically to 23S rRNA; its binding is stimulated by other ribosomal proteins, e.g. L4, L17, and L20. It is important during the early stages of 50S assembly. It makes multiple contacts with different domains of the 23S rRNA in the assembled 50S subunit and ribosome. Functionally, the globular domain of the protein is located near the polypeptide exit tunnel on the outside of the subunit, while an extended beta-hairpin is found that lines the wall of the exit tunnel in the center of the 70S ribosome. In Rhodospirillum rubrum (strain ATCC 11170 / ATH 1.1.1 / DSM 467 / LMG 4362 / NCIMB 8255 / S1), this protein is Large ribosomal subunit protein uL22.